The primary structure comprises 636 residues: Chaperone protein DnaK (636 aa).

Residue T203 is modified to Phosphothreonine; by autocatalysis. The interval 602–636 is disordered; that stretch reads VYGKQQEGAPAQEEPSAEGKKADDEGTVEGEFREV. The segment covering 618 to 636 has biased composition (basic and acidic residues); sequence AEGKKADDEGTVEGEFREV.

It belongs to the heat shock protein 70 family.

Acts as a chaperone. The chain is Chaperone protein DnaK from Dehalococcoides mccartyi (strain ATCC BAA-2100 / JCM 16839 / KCTC 5957 / BAV1).